The sequence spans 150 residues: FAD synthase (150 aa).

Residues 20–21 (TF), 25–28 (HPGH), and aspartate 103 contribute to the ATP site.

The protein belongs to the archaeal FAD synthase family. Homodimer. A divalent metal cation is required as a cofactor.

The enzyme catalyses FMN + ATP + H(+) = FAD + diphosphate. The protein operates within cofactor biosynthesis; FAD biosynthesis; FAD from FMN: step 1/1. Its function is as follows. Catalyzes the transfer of the AMP portion of ATP to flavin mononucleotide (FMN) to produce flavin adenine dinucleotide (FAD) coenzyme. This Methanohalobium evestigatum (strain ATCC BAA-1072 / DSM 3721 / NBRC 107634 / OCM 161 / Z-7303) protein is FAD synthase.